Consider the following 139-residue polypeptide: Large ribosomal subunit protein uL16 (139 aa).

Over residues 1–20 (MLIPRRVKHRKQHHPKRRGM) the composition is skewed to basic residues. The disordered stretch occupies residues 1-22 (MLIPRRVKHRKQHHPKRRGMAK).

Belongs to the universal ribosomal protein uL16 family. In terms of assembly, part of the 50S ribosomal subunit.

Functionally, binds 23S rRNA and is also seen to make contacts with the A and possibly P site tRNAs. This Streptomyces coelicolor (strain ATCC BAA-471 / A3(2) / M145) protein is Large ribosomal subunit protein uL16.